The following is an 883-amino-acid chain: DNA mismatch repair protein MutS (883 aa).

A disordered region spans residues Met1–Thr25. The segment covering Val11–Thr25 has biased composition (basic and acidic residues). Gly664 to Ser671 contacts ATP. The segment at Arg857–Phe883 is disordered.

This sequence belongs to the DNA mismatch repair MutS family.

This protein is involved in the repair of mismatches in DNA. It is possible that it carries out the mismatch recognition step. This protein has a weak ATPase activity. This Acaryochloris marina (strain MBIC 11017) protein is DNA mismatch repair protein MutS.